Reading from the N-terminus, the 796-residue chain is Quinoprotein glucose dehydrogenase (796 aa).

At 1–10 (MAINNTGSRR) the chain is on the cytoplasmic side. The helical transmembrane segment at 11 to 37 (LLVTLTALFAALCGLYLLIGGGWLVAI) threads the bilayer. At 38–40 (GGS) the chain is on the periplasmic side. A helical transmembrane segment spans residues 41 to 58 (WYYPIAGLVMLGVAWMLW). The Cytoplasmic segment spans residues 59-62 (RSKR). The helical transmembrane segment at 63–81 (AALWLYAALLLGTMIWGVW) threads the bilayer. The Periplasmic segment spans residues 82–95 (EVGFDFWALTPRSD). A helical membrane pass occupies residues 96–110 (ILVFFGIWLILPFVW). Residues 111–118 (RRLVIPAS) are Cytoplasmic-facing. Residues 119–141 (GAVAALVVALLISGGILTWAGFN) form a helical membrane-spanning segment. The Periplasmic portion of the chain corresponds to 142-796 (DPQEINGTLS…VAYALPDDVK (655 aa)). Asp-466 (proton acceptor) is an active-site residue.

It belongs to the bacterial PQQ dehydrogenase family. In terms of assembly, monomer. It depends on pyrroloquinoline quinone as a cofactor.

Its subcellular location is the cell inner membrane. The catalysed reaction is a ubiquinone + D-glucose = D-glucono-1,5-lactone + a ubiquinol. GDH is probably involved in energy conservation rather than in sugar metabolism. This chain is Quinoprotein glucose dehydrogenase (gcd), found in Escherichia coli (strain K12).